A 335-amino-acid polypeptide reads, in one-letter code: L-carnitine dehydrogenase (335 aa).

29-34 lines the NAD(+) pocket; the sequence is GTGVIG.

The protein belongs to the 3-hydroxyacyl-CoA dehydrogenase family. L-carnitine dehydrogenase subfamily. In terms of assembly, homodimer.

The protein localises to the cytoplasm. It carries out the reaction carnitine + NAD(+) = 3-dehydrocarnitine + NADH + H(+). Its pathway is amine and polyamine metabolism; carnitine metabolism. In terms of biological role, catalyzes the NAD(+)-dependent oxidation of L-carnitine to 3-dehydrocarnitine. This Streptomyces griseus subsp. griseus (strain JCM 4626 / CBS 651.72 / NBRC 13350 / KCC S-0626 / ISP 5235) protein is L-carnitine dehydrogenase.